A 173-amino-acid chain; its full sequence is Photosystem I assembly protein Ycf3 (173 aa).

3 TPR repeats span residues 35–68 (AFYY…EKDP), 72–105 (SFIL…NPNL), and 120–153 (GNKL…APYN).

This sequence belongs to the Ycf3 family.

The protein resides in the plastid. It localises to the chloroplast thylakoid membrane. Essential for the assembly of the photosystem I (PSI) complex. May act as a chaperone-like factor to guide the assembly of the PSI subunits. The sequence is that of Photosystem I assembly protein Ycf3 from Cyanidium caldarium (Red alga).